The following is a 188-amino-acid chain: Threonylcarbamoyl-AMP synthase (188 aa).

Residues 3–188 (QLSSTQVTPV…RSGLVLRNGQ (186 aa)) enclose the YrdC-like domain.

The protein belongs to the SUA5 family. TsaC subfamily.

It localises to the cytoplasm. It carries out the reaction L-threonine + hydrogencarbonate + ATP = L-threonylcarbamoyladenylate + diphosphate + H2O. Its function is as follows. Required for the formation of a threonylcarbamoyl group on adenosine at position 37 (t(6)A37) in tRNAs that read codons beginning with adenine. Catalyzes the conversion of L-threonine, HCO(3)(-)/CO(2) and ATP to give threonylcarbamoyl-AMP (TC-AMP) as the acyladenylate intermediate, with the release of diphosphate. In Shewanella denitrificans (strain OS217 / ATCC BAA-1090 / DSM 15013), this protein is Threonylcarbamoyl-AMP synthase.